Consider the following 367-residue polypeptide: rRNA processing protein RCL1 (367 aa).

The residue at position 2 (serine 2) is an N-acetylserine.

It belongs to the RNA 3'-terminal cyclase family. Type 2 subfamily. Interacts directly with BMS1 and the U3 snoRNA to form a stable subcomplex. Component of the 90S small subunit processome also known as 90S pre-ribosome that consists of the 35S pre-rRNA, early-associating ribosomal proteins most of which are part of the small ribosomal subunit, the U3 snoRNA and associated proteins.

It is found in the nucleus. It localises to the nucleolus. Its function is as follows. Does not have cyclase activity. Plays a role in 40S-ribosomal-subunit biogenesis in the early pre-rRNA processing steps at sites A0, A1 and A2 that are required for proper maturation of the 18S RNA. RCL1 activates BMS1 by promoting GDP/GTP exchange. This Saccharomyces cerevisiae (strain ATCC 204508 / S288c) (Baker's yeast) protein is rRNA processing protein RCL1 (RCL1).